Consider the following 273-residue polypeptide: uncharacterized protein (273 aa).

This is an uncharacterized protein from Acanthamoeba polyphaga mimivirus (APMV).